The primary structure comprises 612 residues: Elongation factor 4 (612 aa).

The 183-residue stretch at 11–193 (NHIRNFSIVA…KIVTDIPAPS (183 aa)) folds into the tr-type G domain. Residues 23 to 28 (DHGKST) and 140 to 143 (NKID) each bind GTP.

This sequence belongs to the TRAFAC class translation factor GTPase superfamily. Classic translation factor GTPase family. LepA subfamily.

Its subcellular location is the cell membrane. It catalyses the reaction GTP + H2O = GDP + phosphate + H(+). Required for accurate and efficient protein synthesis under certain stress conditions. May act as a fidelity factor of the translation reaction, by catalyzing a one-codon backward translocation of tRNAs on improperly translocated ribosomes. Back-translocation proceeds from a post-translocation (POST) complex to a pre-translocation (PRE) complex, thus giving elongation factor G a second chance to translocate the tRNAs correctly. Binds to ribosomes in a GTP-dependent manner. This is Elongation factor 4 from Lactobacillus acidophilus (strain ATCC 700396 / NCK56 / N2 / NCFM).